The chain runs to 480 residues: MAGFAEIGLSSWLVEQCRQLGLKQPTPVQLGCIPAILEGRDCLGCAKTGSGKTAAFVLPILQKLSEDPYGIFCLVLTPTRELAYQIAEQFRVLGKPLGLKDCIIVGGMDMVAQALELSRKPHVVIATPGRLADHLRSSNTFNMKKIQFLVMDEADRLLEQGCTDFTTDLETILAAVPARRQTLLFSATLTDTLKELQGLATNEPFFWEAQATVRTVEQLDQRYLLVPEKVKDAYLVHLVQTFQDQLEDCSIIIFTNTCKTCQILCMMLRKFNFPTVALHSMMKQKERFAALAKFKSSIYRILIATDVASRGLDIPTVQVVINHNTPGLPKIYIHRVGRTARAGRQGQAITLVTQYDIHLLHAIEEQIKQQLAELVVEEAEVLQILTQVNVVRRECEIKLEASHFDEKKEINKRKQMILEGKDPDLEAKRKAELAKIKQQNRRFKEKVGQTLRRQKAGSTVRRSRPPRSRPQEPAQAEAQD.

The Q motif signature appears at 2 to 30 (AGFAEIGLSSWLVEQCRQLGLKQPTPVQL). A Helicase ATP-binding domain is found at 33-207 (IPAILEGRDC…GLATNEPFFW (175 aa)). 46–53 (AKTGSGKT) serves as a coordination point for ATP. The DEAD box signature appears at 152–155 (DEAD). Positions 218-382 (QLDQRYLLVP…ELVVEEAEVL (165 aa)) constitute a Helicase C-terminal domain. Positions 438-480 (QQNRRFKEKVGQTLRRQKAGSTVRRSRPPRSRPQEPAQAEAQD) are disordered.

This sequence belongs to the DEAD box helicase family. DDX49/DBP8 subfamily.

Its subcellular location is the nucleus. It localises to the nucleolus. It carries out the reaction ATP + H2O = ADP + phosphate + H(+). Functionally, ATP-dependent RNA helicase that plays a role in various aspects of RNA metabolism including the regulation of mRNA export and the levels of pre-ribosomal RNA. Regulates the stability and synthesis of pre-ribosomal RNA and thereby regulates cell proliferation. Also possesses antiviral activity by recognizing gammaherpesvirus transcripts in the context of lytic reactivation. The polypeptide is Probable ATP-dependent RNA helicase DDX49 (Ddx49) (Mus musculus (Mouse)).